We begin with the raw amino-acid sequence, 255 residues long: Microfibril-associated glycoprotein 4 (255 aa).

Residues 1–21 form the signal peptide; the sequence is MKALLALPLLLLLSTPPCAPQ. Residues 26–28 carry the Cell attachment site motif; that stretch reads RGD. In terms of domain architecture, Fibrinogen C-terminal spans 32 to 255; the sequence is RFCLQQPLDC…KRTEMKIRRA (224 aa). 2 N-linked (GlcNAc...) asparagine glycosylation sites follow: N87 and N137.

Homodimer. Can also form higher oligomers. Interacts with FBN1, FBN2 and LOX. Interacts with COL1A1 in a Ca (2+)-dependent manner. Interacts with ELN in a Ca (2+)-dependent manner; this interaction promotes ELN self-assembly.

The protein localises to the secreted. The protein resides in the extracellular space. Its subcellular location is the extracellular matrix. Its function is as follows. Could be involved in calcium-dependent cell adhesion or intercellular interactions. May contribute to the elastic fiber assembly and/or maintenance. This is Microfibril-associated glycoprotein 4 (MFAP4) from Homo sapiens (Human).